The sequence spans 317 residues: Probable porphobilinogen deaminase (317 aa).

Residue Cys234 is modified to S-(dipyrrolylmethanemethyl)cysteine.

It belongs to the HMBS family. Dipyrromethane serves as cofactor.

The enzyme catalyses 4 porphobilinogen + H2O = hydroxymethylbilane + 4 NH4(+). Its pathway is porphyrin-containing compound metabolism; protoporphyrin-IX biosynthesis; coproporphyrinogen-III from 5-aminolevulinate: step 2/4. Functionally, tetrapolymerization of the monopyrrole PBG into the hydroxymethylbilane pre-uroporphyrinogen in several discrete steps. The chain is Probable porphobilinogen deaminase from Methanosarcina acetivorans (strain ATCC 35395 / DSM 2834 / JCM 12185 / C2A).